The following is a 322-amino-acid chain: Arginase (322 aa).

Residues H113, D141, H143, and D145 each coordinate Mn(2+). Substrate contacts are provided by residues 143-147, 154-156, and D200; these read HADIN and SGN. Residues D247 and D249 each contribute to the Mn(2+) site. Substrate is bound by residues T261 and E292.

The protein belongs to the arginase family. As to quaternary structure, homotrimer. Mn(2+) serves as cofactor.

The enzyme catalyses L-arginine + H2O = urea + L-ornithine. The protein operates within nitrogen metabolism; urea cycle; L-ornithine and urea from L-arginine: step 1/1. The polypeptide is Arginase (ARG) (Coccidioides posadasii (strain C735) (Valley fever fungus)).